A 150-amino-acid polypeptide reads, in one-letter code: 1,4-dihydroxy-2-naphthoyl-CoA hydrolase (150 aa).

Aspartate 19 is a catalytic residue.

Belongs to the 4-hydroxybenzoyl-CoA thioesterase family. DHNA-CoA hydrolase subfamily.

The catalysed reaction is 1,4-dihydroxy-2-naphthoyl-CoA + H2O = 1,4-dihydroxy-2-naphthoate + CoA + H(+). Its pathway is cofactor biosynthesis; phylloquinone biosynthesis. It participates in quinol/quinone metabolism; 1,4-dihydroxy-2-naphthoate biosynthesis; 1,4-dihydroxy-2-naphthoate from chorismate: step 7/7. In terms of biological role, catalyzes the hydrolysis of 1,4-dihydroxy-2-naphthoyl-CoA (DHNA-CoA) to 1,4-dihydroxy-2-naphthoate (DHNA), a reaction involved in phylloquinone (vitamin K1) biosynthesis. In Prochlorococcus marinus (strain MIT 9312), this protein is 1,4-dihydroxy-2-naphthoyl-CoA hydrolase.